Consider the following 53-residue polypeptide: Large ribosomal subunit protein eL40 (53 aa).

Belongs to the eukaryotic ribosomal protein eL40 family.

In Pyrobaculum arsenaticum (strain DSM 13514 / JCM 11321 / PZ6), this protein is Large ribosomal subunit protein eL40.